The sequence spans 1359 residues: Junctional cadherin 5-associated protein (1359 aa).

Disordered stretches follow at residues 1 to 147, 249 to 411, 454 to 554, 591 to 813, 840 to 1076, 1105 to 1141, 1157 to 1207, 1225 to 1260, and 1276 to 1359; these read MYSV…SLPV, PLNE…PAHP, NSSP…TCET, SHLP…CNSK, KELQ…TIEI, RAGQ…PRVS, PLFV…KDVE, SVAG…DRLM, and FRNA…VERV. Basic and acidic residues predominate over residues 15–28; it reads LSRDPPASREDNPK. Composition is skewed to polar residues over residues 82 to 91 and 98 to 112; these read PQSTSASRTS and QPPS…TGND. Over residues 120 to 135 the composition is skewed to basic and acidic residues; that stretch reads RQEARSQKPREHENLE. Low complexity predominate over residues 302–321; sequence QQSRGGADSSDSQDSQQMDA. Over residues 335-353 the composition is skewed to pro residues; sequence LEPPVYVPPPSYRSPPQNI. A compositionally biased stretch (polar residues) spans 539–554; it reads RQVSSPYSQGESTCET. Residues 591 to 613 are compositionally biased toward basic and acidic residues; that stretch reads SHLPDRDMDNNDLKPSADQKNGS. Polar residues-rich tracts occupy residues 619–632, 689–704, and 756–773; these read LQEQ…STDL, QQTQ…SSQL, and LSPS…SVDQ. Positions 849-859 are enriched in low complexity; the sequence is SSSSSSSSSSS. Basic and acidic residues predominate over residues 868 to 880; it reads QENRAHCRQEDVG. A compositionally biased stretch (polar residues) spans 1003 to 1013; the sequence is PKITSAFSSVK. Ser1044 and Ser1050 each carry phosphoserine. Position 1194 is a phosphoserine (Ser1194). Ser1281 carries the post-translational modification Phosphoserine. Residues 1324-1342 are compositionally biased toward basic and acidic residues; the sequence is SISREEKEHPAAQKEKSMD.

It is found in the cell junction. Its subcellular location is the adherens junction. The sequence is that of Junctional cadherin 5-associated protein from Homo sapiens (Human).